The sequence spans 559 residues: Glucosylglycerate phosphorylase (559 aa).

Residue Asp229 is the Nucleophile of the active site.

The protein belongs to the glycosyl hydrolase 13 family. Glucosylglycerate phosphorylase subfamily.

It carries out the reaction (2R)-2-O-(alpha-D-glucopyranosyl)-glycerate + phosphate = (R)-glycerate + alpha-D-glucose 1-phosphate. Catalyzes the reversible phosphorolysis of glucosylglycerate into alpha-D-glucose 1-phosphate (Glc1P) and D-glycerate (also called (R)-glycerate). May be a regulator of intracellular levels of glucosylglycerate, a compatible solute that primarily protects organisms facing salt stress and very specific nutritional constraints. Cannot catalyze the phosphorolysis of sucrose. Does not act on other sugars such as alpha-D-galactose 1-phosphate, alpha-D-mannose 1-phosphate or beta-D-glucose 1-phosphate; in vitro D-erythronate can substitute for D-glycerate with a much lower efficiency. This chain is Glucosylglycerate phosphorylase (ycjM), found in Escherichia coli (strain K12).